The sequence spans 803 residues: Homeobox protein Wariai (803 aa).

A compositionally biased stretch (polar residues) spans 23 to 41 (SDYDSYEQQYNNPTGSKQY). The segment at 23–144 (SDYDSYEQQY…PTPYSSNSFS (122 aa)) is disordered. Positions 42–124 (NNNNNNNTNT…NNNNNNNNNN (83 aa)) are enriched in low complexity. Residues 125–138 (QHLSQSQQLSPTPY) show a composition bias toward polar residues. A DNA-binding region (homeobox) is located at residues 162 to 221 (SKKKRKRTSPDQLKLLEKIFMAHQHPNLNLRSQLAVELHMTARSVQIWFQNRRAKARNME). The interval 288–330 (INGNMGGGGGGGGGSHNHHHHNHNHNHHNHNHNHNHNQPLSNG) is disordered. Positions 291–302 (NMGGGGGGGGGS) are enriched in gly residues. The span at 303–322 (HNHHHHNHNHNHHNHNHNHN) shows a compositional bias: basic residues. ANK repeat units lie at residues 374-403 (KGLS…NPNI), 407-436 (QGNT…DPNL), 440-469 (EGVS…EVSV), 474-503 (NGET…KASV), 507-536 (NNRT…DMNA), 540-569 (DGHT…DPNI), 573-602 (EGYT…KLNI), 606-636 (NGQN…EIAA), and 642-671 (QGYT…SKKI). A disordered region spans residues 695-760 (KSSNNNNSNS…PPGNKFEEDD (66 aa)). Residues 696-746 (SSNNNNSNSNINNINNINNINNINSQPNTNSDNNNNNNNNNFNENYSNGNN) show a composition bias toward low complexity.

It localises to the nucleus. Putative transcription factor, that seems to be involved in anterior-posterior patterning of the slug, probably by controlling the proportions of prestalk and prespore cells. This chain is Homeobox protein Wariai (warA), found in Dictyostelium discoideum (Social amoeba).